A 441-amino-acid polypeptide reads, in one-letter code: Putative T-box protein 32 (441 aa).

Positions 18-199 (NVIGSSRTSD…TGPSAKKTPE (182 aa)) form a DNA-binding region, T-box. Positions 268-289 (SLSSPAALQQDSTVSSDNDFDD) are disordered. Residues 273–284 (AALQQDSTVSSD) are compositionally biased toward polar residues.

Its subcellular location is the nucleus. The chain is Putative T-box protein 32 (tbx-32) from Caenorhabditis elegans.